Reading from the N-terminus, the 387-residue chain is uncharacterized protein (387 aa).

Positions 1–23 (MSSLPRNAVARNSKMHKKRDSGV) are disordered. Residues 98-129 (KIARDLKKRQEDYEKTKLEVERLKRSEELANK) adopt a coiled-coil conformation. A disordered region spans residues 146-255 (ENNTVEPNNE…NKKKKKEKNK (110 aa)). 2 stretches are compositionally biased toward low complexity: residues 162–175 (EQITEQTVEQTTEQ) and 182–194 (EQTTEKTTQQTAE). The segment covering 204–213 (TVEKSGDQST) has biased composition (basic and acidic residues). Positions 214 to 231 (EKTTQQTAEESVEQSTEQ) are enriched in polar residues.

This is an uncharacterized protein from Acanthamoeba polyphaga mimivirus (APMV).